Reading from the N-terminus, the 504-residue chain is Probable cytosol aminopeptidase (504 aa).

Mn(2+) contacts are provided by Lys272 and Asp277. Lys284 is a catalytic residue. Mn(2+) is bound by residues Asp295, Asp354, and Glu356. Arg358 is a catalytic residue.

It belongs to the peptidase M17 family. Requires Mn(2+) as cofactor.

The protein resides in the cytoplasm. The enzyme catalyses Release of an N-terminal amino acid, Xaa-|-Yaa-, in which Xaa is preferably Leu, but may be other amino acids including Pro although not Arg or Lys, and Yaa may be Pro. Amino acid amides and methyl esters are also readily hydrolyzed, but rates on arylamides are exceedingly low.. It catalyses the reaction Release of an N-terminal amino acid, preferentially leucine, but not glutamic or aspartic acids.. In terms of biological role, presumably involved in the processing and regular turnover of intracellular proteins. Catalyzes the removal of unsubstituted N-terminal amino acids from various peptides. This is Probable cytosol aminopeptidase from Chlorobaculum tepidum (strain ATCC 49652 / DSM 12025 / NBRC 103806 / TLS) (Chlorobium tepidum).